We begin with the raw amino-acid sequence, 511 residues long: Inner membrane ABC transporter permease protein YnjC (511 aa).

The Cytoplasmic portion of the chain corresponds to 1 to 8 (MATPLRYA). A helical transmembrane segment spans residues 9–29 (LIFLLWAMVAVIYAPLIPAAL). Residues 30–62 (TLISPALSLTHWQALFADPQLPQALLATLVSTT) are Periplasmic-facing. The region spanning 54-255 (LLATLVSTTI…MLLLAAYVLL (202 aa)) is the ABC transmembrane type-1 1 domain. The chain crosses the membrane as a helical span at residues 63-83 (IAAVGALLIALLVIVALWPGP). At 84-91 (KWQRMCAR) the chain is on the cytoplasmic side. A helical membrane pass occupies residues 92 to 112 (LPWLLAIPHVAFATSALLLFA). The Periplasmic portion of the chain corresponds to 113–130 (DGGLLYDYFPYFTPPMDR). The helical transmembrane segment at 131–151 (FGIGLGLTLAVKESAFLLWIL) threads the bilayer. Residues 152-189 (AAVLSEKWLLQQVIVLDSLGYSRWQCLNWLLLPSVAPA) are Cytoplasmic-facing. Residues 190–210 (LAMAMLAIVAWSLSVVDVAII) form a helical membrane-spanning segment. Over 211-239 (LGPGNPPTLAVISWQWLTQGDIDQQTKGA) the chain is Periplasmic. Residues 240 to 260 (LASLLLMLLLAAYVLLSYLLW) traverse the membrane as a helical segment. Residues 261-284 (RSWRRTIPRVDGVRKPATPLLPGN) lie on the Cytoplasmic side of the membrane. A helical transmembrane segment spans residues 285–305 (TLAIFLPLTGVLCVVLLAILA). The Periplasmic segment spans residues 306-318 (DQSTINSEALINS). Positions 315–496 (LINSLTMGLV…LLPLIIFALT (182 aa)) constitute an ABC transmembrane type-1 2 domain. A helical membrane pass occupies residues 319–339 (LTMGLVATFIALLLLLLWLEW). The Cytoplasmic segment spans residues 340 to 345 (GPQRRQ). A helical membrane pass occupies residues 346–366 (LWLWLPILLPALPLVAGQYTL). The Periplasmic segment spans residues 367 to 374 (ALWLKLDG). The chain crosses the membrane as a helical span at residues 375–395 (SWTAVVWGHLLWVMPWMLFIL). Residues 396 to 432 (QPAWQRIDSRLILIAQTLGWSRAKIFFYVKCPLMLRP) are Cytoplasmic-facing. Residues 433–453 (VLIAFAVGFAVGIAQYMPTLW) form a helical membrane-spanning segment. The Periplasmic portion of the chain corresponds to 454 to 485 (LGAGRFPTLTTEAVALSSGGSNGILAAQALWQ). A helical membrane pass occupies residues 486 to 506 (LLLPLIIFALTALVAKWVGYV). Residues 507 to 511 (RQGLR) lie on the Cytoplasmic side of the membrane.

The protein belongs to the binding-protein-dependent transport system permease family.

It is found in the cell inner membrane. Probably part of the binding-protein-dependent transport system YnjCD. Probably responsible for the translocation of the substrate across the membrane. The chain is Inner membrane ABC transporter permease protein YnjC (ynjC) from Escherichia coli (strain K12).